The primary structure comprises 306 residues: uncharacterized protein (306 aa).

Residues 277-306 adopt a coiled-coil conformation; sequence TEIIQNYKIANELKKEKQQNKKKNSIELEE.

This is an uncharacterized protein from Saccharolobus islandicus (Sulfolobus islandicus).